The primary structure comprises 607 residues: Aspartate--tRNA(Asp/Asn) ligase (607 aa).

Glu194 contacts L-aspartate. An aspartate region spans residues 218–221 (QLFK). Arg240 is an L-aspartate binding site. Residues 240 to 242 (RDE) and Gln249 each bind ATP. L-aspartate is bound at residue His468. Glu502 lines the ATP pocket. Arg509 contacts L-aspartate. 554–557 (GLDR) is an ATP binding site.

Belongs to the class-II aminoacyl-tRNA synthetase family. Type 1 subfamily. As to quaternary structure, homodimer.

The protein resides in the cytoplasm. It catalyses the reaction tRNA(Asx) + L-aspartate + ATP = L-aspartyl-tRNA(Asx) + AMP + diphosphate. Aspartyl-tRNA synthetase with relaxed tRNA specificity since it is able to aspartylate not only its cognate tRNA(Asp) but also tRNA(Asn). Reaction proceeds in two steps: L-aspartate is first activated by ATP to form Asp-AMP and then transferred to the acceptor end of tRNA(Asp/Asn). In Desulfotalea psychrophila (strain LSv54 / DSM 12343), this protein is Aspartate--tRNA(Asp/Asn) ligase.